The chain runs to 294 residues: 4-hydroxy-tetrahydrodipicolinate synthase (294 aa).

Threonine 47 contacts pyruvate. Tyrosine 135 acts as the Proton donor/acceptor in catalysis. Catalysis depends on lysine 163, which acts as the Schiff-base intermediate with substrate. Position 205 (threonine 205) interacts with pyruvate.

This sequence belongs to the DapA family. In terms of assembly, homotetramer; dimer of dimers.

It is found in the cytoplasm. The catalysed reaction is L-aspartate 4-semialdehyde + pyruvate = (2S,4S)-4-hydroxy-2,3,4,5-tetrahydrodipicolinate + H2O + H(+). Its pathway is amino-acid biosynthesis; L-lysine biosynthesis via DAP pathway; (S)-tetrahydrodipicolinate from L-aspartate: step 3/4. Catalyzes the condensation of (S)-aspartate-beta-semialdehyde [(S)-ASA] and pyruvate to 4-hydroxy-tetrahydrodipicolinate (HTPA). In Rickettsia rickettsii, this protein is 4-hydroxy-tetrahydrodipicolinate synthase.